The chain runs to 373 residues: Probable leucine aminopeptidase 1 (373 aa).

An N-terminal signal peptide occupies residues 1–18 (MKLLSVLALSATATSVLG). Zn(2+)-binding residues include H176 and D195. The N-linked (GlcNAc...) asparagine glycan is linked to N196. E234 and D261 together coordinate Zn(2+). A glycan (N-linked (GlcNAc...) asparagine) is linked at N288. C310 and C314 form a disulfide bridge. H343 is a binding site for Zn(2+).

Belongs to the peptidase M28 family. M28E subfamily. As to quaternary structure, monomer. Requires Zn(2+) as cofactor.

The protein resides in the secreted. Extracellular aminopeptidase which contributes to pathogenicity. This is Probable leucine aminopeptidase 1 (LAP1) from Trichophyton verrucosum (strain HKI 0517).